We begin with the raw amino-acid sequence, 548 residues long: Membrane protein insertase YidC (548 aa).

Residues asparagine 6 to aspartate 26 traverse the membrane as a helical segment. The disordered stretch occupies residues asparagine 28–serine 55. A compositionally biased stretch (low complexity) spans glutamine 30–glutamine 50. 4 helical membrane-spanning segments follow: residues phenylalanine 350–tyrosine 370, leucine 420–leucine 440, leucine 458–isoleucine 478, and proline 499–valine 519.

It belongs to the OXA1/ALB3/YidC family. Type 1 subfamily. Interacts with the Sec translocase complex via SecD. Specifically interacts with transmembrane segments of nascent integral membrane proteins during membrane integration.

It is found in the cell inner membrane. Functionally, required for the insertion and/or proper folding and/or complex formation of integral membrane proteins into the membrane. Involved in integration of membrane proteins that insert both dependently and independently of the Sec translocase complex, as well as at least some lipoproteins. Aids folding of multispanning membrane proteins. This chain is Membrane protein insertase YidC, found in Shigella boydii serotype 18 (strain CDC 3083-94 / BS512).